The chain runs to 390 residues: MQFAKRLEKIPPYLFAEINRKREALIAKGVDIINIGVGDPDKPTPAHILQAMREAIDDASNHNYPPYEGTQEFREAAVEWMERRFGVMDLNPNTEVVSSIGSKEAIHNTFLAFVEAGDYTLIPDPGYPVYRTSTIFAGGEAFSMPLKAENKFLPDLDLIPEEVARKAKMLWINYPNNPTGALATLEFFEELVALCQQYSILLCHDHAYSEMAYDGYKPPSVLQIPGAKDIAIEFHSLSKSYNMTGWRIGFAVGNAYAIKGLSQVKTNVDSGVFKAIQKAAIAAYATDEVELQAVMSVYQSRRDIIVKGLQSLGWPIEPPKATLYVWVPVPPGYTSTEFTTLLLDKCGIVVPPGVGYGASGEGYFRVALTISDERLHEAIQRMQDAGIRYA.

Residues Tyr-13 and Gly-38 each contribute to the substrate site. Pyridoxal 5'-phosphate contacts are provided by residues Tyr-67, 102–103 (SK), Tyr-127, Asn-177, Tyr-208, and 236–238 (SLS). Residues Lys-103, Tyr-127, and Asn-177 each coordinate substrate. Position 239 is an N6-(pyridoxal phosphate)lysine (Lys-239). Arg-247 serves as a coordination point for pyridoxal 5'-phosphate. A substrate-binding site is contributed by Arg-365.

This sequence belongs to the class-I pyridoxal-phosphate-dependent aminotransferase family. LL-diaminopimelate aminotransferase subfamily. In terms of assembly, homodimer. Pyridoxal 5'-phosphate is required as a cofactor.

The catalysed reaction is (2S,6S)-2,6-diaminopimelate + 2-oxoglutarate = (S)-2,3,4,5-tetrahydrodipicolinate + L-glutamate + H2O + H(+). The protein operates within amino-acid biosynthesis; L-lysine biosynthesis via DAP pathway; LL-2,6-diaminopimelate from (S)-tetrahydrodipicolinate (aminotransferase route): step 1/1. Functionally, involved in the synthesis of meso-diaminopimelate (m-DAP or DL-DAP), required for both lysine and peptidoglycan biosynthesis. Catalyzes the direct conversion of tetrahydrodipicolinate to LL-diaminopimelate. The protein is LL-diaminopimelate aminotransferase 2 of Nostoc sp. (strain PCC 7120 / SAG 25.82 / UTEX 2576).